A 302-amino-acid chain; its full sequence is RuBisCO operon transcriptional regulator (302 aa).

An HTH lysR-type domain is found at 1-60 (MHVSLRQLRVFEAVARHNSYTRAAEELHLSQPAVSMQVRQLEDEIGLSLFERLGKQVVLT). Residues 20–39 (YTRAAEELHLSQPAVSMQVR) constitute a DNA-binding region (H-T-H motif).

Belongs to the LysR transcriptional regulatory family.

Its function is as follows. Trans-acting transcriptional regulator of RuBisCO genes (rbcAB) expression. This is RuBisCO operon transcriptional regulator (rbcR) from Allochromatium vinosum (Chromatium vinosum).